A 308-amino-acid polypeptide reads, in one-letter code: ATP synthase gamma chain (308 aa).

The protein belongs to the ATPase gamma chain family. As to quaternary structure, F-type ATPases have 2 components, CF(1) - the catalytic core - and CF(0) - the membrane proton channel. CF(1) has five subunits: alpha(3), beta(3), gamma(1), delta(1), epsilon(1). CF(0) has three main subunits: a, b and c.

It localises to the cell inner membrane. Functionally, produces ATP from ADP in the presence of a proton gradient across the membrane. The gamma chain is believed to be important in regulating ATPase activity and the flow of protons through the CF(0) complex. In Salinibacter ruber (strain DSM 13855 / M31), this protein is ATP synthase gamma chain.